Consider the following 298-residue polypeptide: Mitochondrial basic amino acids transporter (298 aa).

Helical transmembrane passes span 2–22 (ALDFLAGCAGGVAGVLVGHPF), 61–81 (GLGSPLLGLTFINALVFGVQG), 96–116 (FLAGAAAGAIQCVICCPMELA), 153–172 (GMVSTLLRETPSFGVYFLTY), 187–207 (LLVPKLLLAGGTSGIASWLST), and 255–275 (LLRAFPVNAATFATVTVVLSY). 3 Solcar repeats span residues 2–86 (ALDF…TLRA), 90–178 (DSPL…LTRA), and 185–275 (DRLL…VLSY).

Belongs to the mitochondrial carrier (TC 2.A.29) family.

It localises to the mitochondrion inner membrane. The enzyme catalyses L-lysine(out) + L-arginine(in) = L-lysine(in) + L-arginine(out). The catalysed reaction is L-histidine(out) + L-arginine(in) = L-histidine(in) + L-arginine(out). It carries out the reaction L-ornithine(in) + L-arginine(out) = L-ornithine(out) + L-arginine(in). It catalyses the reaction L-homoarginine(in) + L-arginine(out) = L-homoarginine(out) + L-arginine(in). The enzyme catalyses N(omega)-methyl-L-arginine(in) + L-arginine(out) = N(omega)-methyl-L-arginine(out) + L-arginine(in). The catalysed reaction is L-arginine(in) = L-arginine(out). It carries out the reaction L-lysine(in) = L-lysine(out). It catalyses the reaction L-ornithine(in) = L-ornithine(out). The enzyme catalyses L-histidine(out) = L-histidine(in). Its function is as follows. Mitochondrial transporter of arginine, lysine, homoarginine, methylarginine and, to a much lesser extent, ornithine and histidine. Does not transport carnitine nor acylcarnitines. Functions by both counter-exchange and uniport mechanisms. Plays a physiological role in the import of basic amino acids into mitochondria for mitochondrial protein synthesis and amino acid degradation. In Bos taurus (Bovine), this protein is Mitochondrial basic amino acids transporter (SLC25A29).